Consider the following 356-residue polypeptide: MGLLRIMMPPKLQLLAVVAFAVAMLFLENQIQKLEESRAKLERAIARHEVREIEQRHTMDGPRQDAAVDEEEDIVIIYNRVPKTASTSFTNIAYDLCAKNRYHVLHINTTKNNPVMSLQDQVRFVKNITTWNEMKPGFYHGHISYLDFAKFGVKKKPIYINVIRDPIERLVSYYYFLRFGDDYRPGLRRRKQGDKKTFDECVAEGGSDCAPEKLWLQIPFFCGHSSECWNVGSRWAMDQAKYNLINEYFLVGVTEELEDFIMLLEAALPRFFRGATDLYRTGKKSHLRKTTEKKLPTKQTIAKLQQSDIWKMENEFYEFALEQFQFIRAHAVREKDGDLYILAQNFFYEKIYPKSN.

At 1 to 11 (MGLLRIMMPPK) the chain is on the cytoplasmic side. Residues 12 to 28 (LQLLAVVAFAVAMLFLE) traverse the membrane as a helical; Signal-anchor for type II membrane protein segment. Positions 24–51 (MLFLENQIQKLEESRAKLERAIARHEVR) form a coiled coil. At 29–356 (NQIQKLEESR…FYEKIYPKSN (328 aa)) the chain is on the lumenal side. Positions 83, 84, 85, 86, 87, and 88 each coordinate adenosine 3',5'-bisphosphate. Residues N108 and N127 are each glycosylated (N-linked (GlcNAc...) asparagine). Residues H140 and H142 contribute to the active site. Adenosine 3',5'-bisphosphate-binding residues include R164 and S172. Intrachain disulfides connect C201-C209 and C222-C228. Positions 279, 285, 290, and 293 each coordinate adenosine 3',5'-bisphosphate.

Belongs to the sulfotransferase 3 family. Homotrimer. Interacts with the C5-epimerase GLCE. Post-translationally, N-glycosylated.

Its subcellular location is the golgi apparatus membrane. Its function is as follows. Catalyzes the transfer of a sulfo group from 3'-phospho-5'-adenylyl sulfate (PAPS) to the 2-OH position of iduronic acid (IdoA) or glucuronic acid (GlcA) within the heparan sulfate (HS) chain and participates in HS biosynthesis. Required for metanephric development of kidney formation, suggesting that 2-O-sulfation within HS is essential for signaling between ureteric bud and metanephric mesenchyme. This Cricetulus griseus (Chinese hamster) protein is Heparan sulfate 2-O-sulfotransferase 1.